Here is an 811-residue protein sequence, read N- to C-terminus: Glycerol-3-phosphate acyltransferase (811 aa).

The HXXXXD motif motif lies at 303 to 308 (HRSHMD).

Belongs to the GPAT/DAPAT family.

The protein localises to the cell inner membrane. It catalyses the reaction sn-glycerol 3-phosphate + an acyl-CoA = a 1-acyl-sn-glycero-3-phosphate + CoA. The protein operates within phospholipid metabolism; CDP-diacylglycerol biosynthesis; CDP-diacylglycerol from sn-glycerol 3-phosphate: step 1/3. The polypeptide is Glycerol-3-phosphate acyltransferase (Haemophilus ducreyi (strain 35000HP / ATCC 700724)).